A 544-amino-acid polypeptide reads, in one-letter code: Glucans biosynthesis protein G (544 aa).

Residues 1–34 (MVSLLRCQSSKPYSSLICSLALGVAFALSGTAYA) form the signal peptide.

This sequence belongs to the OpgD/OpgG family.

The protein localises to the periplasm. It participates in glycan metabolism; osmoregulated periplasmic glucan (OPG) biosynthesis. Involved in the biosynthesis of osmoregulated periplasmic glucans (OPGs). The sequence is that of Glucans biosynthesis protein G from Shewanella putrefaciens (strain CN-32 / ATCC BAA-453).